We begin with the raw amino-acid sequence, 637 residues long: Sodium-dependent phosphate transport protein 2A (637 aa).

The Cytoplasmic portion of the chain corresponds to 1-103 (MMSYSERLGG…LAQVGTKLLK (103 aa)). Phosphoserine is present on residues S14 and S34. The helical transmembrane segment at 104 to 125 (VPLMLGFLYLFVCSLDVLSSAF) threads the bilayer. Residues 126 to 145 (QLAGGKVAGDIFKDNAILSN) are Extracellular-facing. A helical membrane pass occupies residues 146–163 (PVAGLVVGILVTVLVQSS). Over 164–216 (STSTSIIVSMVSSGLLEVSSAIPIIMGSNIGTSVTNTIVALMQAGDRTDFRRA) the chain is Cytoplasmic. Residues 217-236 (FAGATVHDCFNWLSVLVLLP) form a helical membrane-spanning segment. Cystine bridges form between C225–C520 and C306–C334. Residues 237-345 (LEAATGYLHH…HIFVDTGLPD (109 aa)) lie on the Extracellular side of the membrane. N298 and N328 each carry an N-linked (GlcNAc...) asparagine glycan. The helical transmembrane segment at 346 to 368 (LAVGLILLAGSLVVLCTCLILLV) threads the bilayer. Residues 369–410 (KMLNSLLKGQVANVIQKVINTDFPAPFTWVTGYFAMVVGASM) lie on the Cytoplasmic side of the membrane. Residues 411–434 (TFVVQSSSVFTSAITPLIGLGVIS) form a helical membrane-spanning segment. Residues 435–464 (IERAYPLTLGSNIGTTTTAILAALASPREK) lie on the Extracellular side of the membrane. Residues 465 to 485 (LSSSFQIALCHFFFNISGILL) form a helical membrane-spanning segment. Residues 486–511 (WYPLPCTRLPIRMAKALGKRTAKYRW) lie on the Cytoplasmic side of the membrane. T506 is modified (phosphothreonine; by PKC). A helical membrane pass occupies residues 512–532 (FAVLYLLVCFLLLPSLVFGIS). Over 533-537 (MAGWQ) the chain is Extracellular. The chain crosses the membrane as a helical span at residues 538 to 559 (AMVGVGTPFGALLAFVVLVNVL). The Cytoplasmic portion of the chain corresponds to 560-637 (QSRSPGHLPK…LPAHHNATRL (78 aa)). S605 carries the post-translational modification Phosphoserine. A Phosphothreonine modification is found at T621. Phosphoserine is present on S623.

It belongs to the SLC34A transporter family. In terms of assembly, interacts via its C-terminal region with NHERF4. Interacts with NHERF1. Interacts with TMEM174; regulates SLC34A1 internalization by PTH and FGF23. As to expression, kidney.

It localises to the apical cell membrane. It is found in the cell membrane. It catalyses the reaction 3 Na(+)(out) + phosphate(out) = 3 Na(+)(in) + phosphate(in). With respect to regulation, transport activity is significantly increased in response to dietary phosphate deprivation. Functionally, involved in actively transporting phosphate into cells via Na(+) cotransport in the renal brush border membrane. The cotransport has a Na(+):Pi stoichiometry of 3:1 and is electrogenic. This chain is Sodium-dependent phosphate transport protein 2A, found in Rattus norvegicus (Rat).